The primary structure comprises 493 residues: MAAIKEESDYDSSRSSLTAPDSRRSWISDIGSSSSVSARSFGGDTPASSCRYKPHKANQAEWEAIRRLRAGAGRVGLEHFRLVRRLGSGDLGNVYLCRLREPWSSSSMTTTAGGCLYAMKVVDKDALAFRKKLRRAEVERDILRTLDHPFLPTLYADFEASHYACLVMEFCPGGDLHVARQRQPGRRFTVSSTRFYVAETVLALEYLHMMGVVYRDLKPENVLVRGDGHIMLSDFDLSLKCDVVPKLLRPARSAAAGGKPPLPPPSSCVPPTIQPVLSCIFRGVHKCHHAKECAGGGAAAGNNGDGDGNDEEAETETAEPEVVVVEPVAARSKSFVGTHEYLAPEVISGQGHGSAVDWWTLGVFMYEMLYGRTPFKGESNEKTLINIIKQPVTFPRLAGAAAAGEWEEMKTAQDLMLQLLAKNPKKRLGSTMGSAEVKRHPFFKGVNWALVRSVRPPEVPAPPAPAPKKVMTMSKKERQEPYNYRPENHFDYF.

The disordered stretch occupies residues 1–53; that stretch reads MAAIKEESDYDSSRSSLTAPDSRRSWISDIGSSSSVSARSFGGDTPASSCRYK. Over residues 27–44 the composition is skewed to low complexity; the sequence is ISDIGSSSSVSARSFGGD. The 364-residue stretch at 80–443 folds into the Protein kinase domain; that stretch reads FRLVRRLGSG…SAEVKRHPFF (364 aa). ATP contacts are provided by residues 86 to 94 and Lys-120; that span reads LGSGDLGNV. Asp-216 functions as the Proton acceptor in the catalytic mechanism. Residues 295–306 show a composition bias toward gly residues; it reads GGGAAAGNNGDG. Disordered regions lie at residues 295 to 320 and 458 to 493; these read GGGA…TAEP and EVPA…FDYF. Over residues 307 to 319 the composition is skewed to acidic residues; sequence DGNDEEAETETAE. Residues 444–493 enclose the AGC-kinase C-terminal domain; that stretch reads KGVNWALVRSVRPPEVPAPPAPAPKKVMTMSKKERQEPYNYRPENHFDYF. Basic and acidic residues predominate over residues 474-493; that stretch reads SKKERQEPYNYRPENHFDYF.

It belongs to the protein kinase superfamily. Ser/Thr protein kinase family.

It catalyses the reaction L-seryl-[protein] + ATP = O-phospho-L-seryl-[protein] + ADP + H(+). The catalysed reaction is L-threonyl-[protein] + ATP = O-phospho-L-threonyl-[protein] + ADP + H(+). Serine/threonine-protein kinase involved in the regulation of auxin signaling. The sequence is that of Protein kinase PINOID 2 (PID2) from Oryza sativa subsp. japonica (Rice).